Here is a 437-residue protein sequence, read N- to C-terminus: Double-stranded RNA-binding protein 3 (437 aa).

The disordered stretch occupies residues 1 to 22 (MKKKSAPTPLPPETANTSPAPI). DRBM domains lie at 35–104 (VFKS…EIVK) and 120–187 (LCKN…AIQG). Basic and acidic residues-rich tracts occupy residues 288-310 (AKRV…ENQH) and 320-330 (DEARVEQEPSR). The segment at 288-331 (AKRVEDEPPRDIEMVQPDKENQHSDAALVQPDDEARVEQEPSRD) is disordered.

In terms of biological role, binds double-stranded RNA. The sequence is that of Double-stranded RNA-binding protein 3 (DRB3) from Oryza sativa subsp. japonica (Rice).